The following is a 280-amino-acid chain: UPF0494 membrane protein SPAC212.01c (280 aa).

Helical transmembrane passes span 107–127, 144–164, 178–198, and 199–219; these read WPLLIIWSIIIVFAVDKKFEV, IWVPIAIYVCLLVLMLLSLIF, VIIAVLGAVLGMIIAVLGMII, and AALGMIIAALGATITGLLYFG.

Belongs to the UPF0494 family.

The protein localises to the membrane. The protein is UPF0494 membrane protein SPAC212.01c of Schizosaccharomyces pombe (strain 972 / ATCC 24843) (Fission yeast).